A 626-amino-acid polypeptide reads, in one-letter code: Mitogen-activated protein kinase kinase kinase 3 (626 aa).

Residues 44–123 (DVRIKFEHNG…KSLRILLLSQ (80 aa)) enclose the PB1 domain. Disordered regions lie at residues 125–184 (RNHT…YVPE) and 218–273 (SSAE…VKGG). Composition is skewed to polar residues over residues 128–137 (TSSSPHSGVS), 144–155 (PSQSAGDINTIY), 165–174 (LSVSSQNPGR), and 219–247 (SAEN…QMSR). A phosphoserine mark is found at S147 and S166. Phosphoserine occurs at positions 250 and 312. The segment covering 250-270 (SFPDNRKECSDRETQLYDKGV) has biased composition (basic and acidic residues). S337 carries the phosphoserine; by SGK1 modification. S340 is modified (phosphoserine). Positions 362 to 622 (WRRGKLLGQG…AEELLTHHFA (261 aa)) constitute a Protein kinase domain. ATP is bound by residues 368-376 (LGQGAFGRV) and K391. D489 (proton acceptor) is an active-site residue.

The protein belongs to the protein kinase superfamily. STE Ser/Thr protein kinase family. MAP kinase kinase kinase subfamily. In terms of assembly, binds both upstream activators and downstream substrates in multimolecular complexes. Part of a complex with MAP2K3, RAC1 and CCM2. Interacts with MAP2K5 and SPAG9. Requires Mg(2+) as cofactor. Post-translationally, phosphorylation at Ser-166 and Ser-337 by SGK1 inhibits its activity.

It catalyses the reaction L-seryl-[protein] + ATP = O-phospho-L-seryl-[protein] + ADP + H(+). The enzyme catalyses L-threonyl-[protein] + ATP = O-phospho-L-threonyl-[protein] + ADP + H(+). Activated by phosphorylation on Thr-530. Its function is as follows. Component of a protein kinase signal transduction cascade. Mediates activation of the NF-kappa-B, AP1 and DDIT3 transcriptional regulators. The chain is Mitogen-activated protein kinase kinase kinase 3 (Map3k3) from Mus musculus (Mouse).